A 150-amino-acid chain; its full sequence is Ribonuclease pancreatic (150 aa).

The N-terminal stretch at 1–26 is a signal peptide; the sequence is MALKSLVLLSLLVLVLLLVRVQPSLG. Residues Lys27 and Lys33 are each glycosylated (N-linked (Glc) (glycation) lysine; in vitro). Substrate-binding residues include Lys33 and Arg36. The active-site Proton acceptor is the His38. 4 disulfides stabilise this stretch: Cys52-Cys110, Cys66-Cys121, Cys84-Cys136, and Cys91-Cys98. Residue Asn60 is glycosylated (N-linked (GlcNAc...) asparagine; partial). Lys63 and Lys67 each carry an N-linked (Glc) (glycation) lysine; in vitro glycan. Residues 67–71, Lys92, and Arg111 each bind substrate; that span reads KPVNT. His145 functions as the Proton donor in the catalytic mechanism.

The protein belongs to the pancreatic ribonuclease family. As to quaternary structure, interacts with and forms tight 1:1 complexes with RNH1. Dimerization of two such complexes may occur. Interaction with RNH1 inhibits this protein. Monomer. As to expression, pancreas.

The protein localises to the secreted. The catalysed reaction is an [RNA] containing cytidine + H2O = an [RNA]-3'-cytidine-3'-phosphate + a 5'-hydroxy-ribonucleotide-3'-[RNA].. The enzyme catalyses an [RNA] containing uridine + H2O = an [RNA]-3'-uridine-3'-phosphate + a 5'-hydroxy-ribonucleotide-3'-[RNA].. Functionally, endonuclease that catalyzes the cleavage of RNA on the 3' side of pyrimidine nucleotides. Acts on single-stranded and double-stranded RNA. The polypeptide is Ribonuclease pancreatic (RNASE1) (Bos taurus (Bovine)).